The primary structure comprises 141 residues: Nucleoside diphosphate kinase (141 aa).

ATP-binding residues include K11, F59, R87, T93, R104, and N114. H117 functions as the Pros-phosphohistidine intermediate in the catalytic mechanism.

It belongs to the NDK family. As to quaternary structure, homotetramer. The cofactor is Mg(2+).

Its subcellular location is the cytoplasm. It catalyses the reaction a 2'-deoxyribonucleoside 5'-diphosphate + ATP = a 2'-deoxyribonucleoside 5'-triphosphate + ADP. The catalysed reaction is a ribonucleoside 5'-diphosphate + ATP = a ribonucleoside 5'-triphosphate + ADP. In terms of biological role, major role in the synthesis of nucleoside triphosphates other than ATP. The ATP gamma phosphate is transferred to the NDP beta phosphate via a ping-pong mechanism, using a phosphorylated active-site intermediate. This Herminiimonas arsenicoxydans protein is Nucleoside diphosphate kinase.